We begin with the raw amino-acid sequence, 430 residues long: Enolase (430 aa).

Position 163 (Q163) interacts with (2R)-2-phosphoglycerate. Residue E205 is the Proton donor of the active site. D242, E285, and D312 together coordinate Mg(2+). The (2R)-2-phosphoglycerate site is built by K337, R366, S367, and K388. K337 (proton acceptor) is an active-site residue.

The protein belongs to the enolase family. Requires Mg(2+) as cofactor.

It is found in the cytoplasm. The protein localises to the secreted. It localises to the cell surface. It carries out the reaction (2R)-2-phosphoglycerate = phosphoenolpyruvate + H2O. Its pathway is carbohydrate degradation; glycolysis; pyruvate from D-glyceraldehyde 3-phosphate: step 4/5. Catalyzes the reversible conversion of 2-phosphoglycerate (2-PG) into phosphoenolpyruvate (PEP). It is essential for the degradation of carbohydrates via glycolysis. This is Enolase from Rhodopseudomonas palustris (strain BisB18).